The sequence spans 172 residues: MKKVNVMIYMAFMITLEIVFTRFLSIQTPIIRIGFGFIPVAMSGMMFGPLLAGIVGATSDVLGMMIFPKGAYFPGFTLSAFVGAVIYGVFFYNKKVSVKRVLLAVGIITVLVNLTMNTIWLQILTGKAVKVLFVTRLVKEAIMFPIHAIVIYGAWKMVDRLEIMNKVAKFNK.

The next 5 membrane-spanning stretches (helical) occupy residues 6 to 26 (VMIY…FLSI), 35 to 55 (FGFI…AGIV), 71 to 91 (AYFP…GVFF), 101 to 121 (VLLA…TIWL), and 131 to 151 (VLFV…AIVI).

As to quaternary structure, forms a stable energy-coupling factor (ECF) transporter complex composed of a membrane-embedded substrate-binding protein (S component), two ATP-binding proteins (A components) and a transmembrane protein (T component).

It localises to the cell membrane. Functionally, folate-binding protein that interacts with the energy-coupling factor (ECF) ABC-transporter complex. Unlike classic ABC transporters this ECF transporter provides the energy necessary to transport a number of different substrates. The substrates themselves are bound by transmembrane, not extracytoplasmic soluble proteins. The protein is Folate transporter FolT (folT) of Clostridium novyi (strain NT).